Reading from the N-terminus, the 400-residue chain is Riboflavin biosynthesis protein RibBA (400 aa).

Residues 1-202 (MTTFGTIEQA…IADLVMYRRR (202 aa)) are DHBP synthase. D-ribulose 5-phosphate is bound by residues 28–29 (RE), Asp33, 141–145 (RTGHT), and Glu165. Glu29 is a binding site for Mg(2+). Residue His144 participates in Mg(2+) binding. The segment at 203–400 (TEKQVELVAE…KRDRMGHLLG (198 aa)) is GTP cyclohydrolase II. 253–257 (RAHSE) provides a ligand contact to GTP. Zn(2+) is bound by residues Cys258, Cys269, and Cys271. GTP contacts are provided by residues Gln274, 297–299 (EGR), and Thr319. Asp331 acts as the Proton acceptor; for GTP cyclohydrolase activity in catalysis. Arg333 (nucleophile; for GTP cyclohydrolase activity) is an active-site residue. 2 residues coordinate GTP: Thr354 and Lys359.

In the N-terminal section; belongs to the DHBP synthase family. It in the C-terminal section; belongs to the GTP cyclohydrolase II family. It depends on Mg(2+) as a cofactor. Mn(2+) is required as a cofactor. The cofactor is Zn(2+).

It carries out the reaction D-ribulose 5-phosphate = (2S)-2-hydroxy-3-oxobutyl phosphate + formate + H(+). The catalysed reaction is GTP + 4 H2O = 2,5-diamino-6-hydroxy-4-(5-phosphoribosylamino)-pyrimidine + formate + 2 phosphate + 3 H(+). It functions in the pathway cofactor biosynthesis; riboflavin biosynthesis; 2-hydroxy-3-oxobutyl phosphate from D-ribulose 5-phosphate: step 1/1. Its pathway is cofactor biosynthesis; riboflavin biosynthesis; 5-amino-6-(D-ribitylamino)uracil from GTP: step 1/4. Catalyzes the conversion of D-ribulose 5-phosphate to formate and 3,4-dihydroxy-2-butanone 4-phosphate. Its function is as follows. Catalyzes the conversion of GTP to 2,5-diamino-6-ribosylamino-4(3H)-pyrimidinone 5'-phosphate (DARP), formate and pyrophosphate. The sequence is that of Riboflavin biosynthesis protein RibBA from Salinispora tropica (strain ATCC BAA-916 / DSM 44818 / JCM 13857 / NBRC 105044 / CNB-440).